The primary structure comprises 395 residues: Nickel and cobalt resistance protein CnrB (395 aa).

The helical transmembrane segment at 13–33 (MIAGVAAVAAAVGFGAAHLPV) threads the bilayer. The tract at residues 35 to 55 (EKSPASTQAPEAQKPQSAPVK) is disordered. A compositionally biased stretch (polar residues) spans 37–50 (SPASTQAPEAQKPQ). A coiled-coil region spans residues 140-193 (AAERKVAQAKADLARKTYEREASLFQQGVTPRQEMEAAKAALDVAQAEALRAAT).

It belongs to the membrane fusion protein (MFP) (TC 8.A.1) family.

Its subcellular location is the cell inner membrane. The products of the genes cnrA, cnrB, and cnrC are likely to form a membrane-bound protein complex catalyzing an energy-dependent efflux of Ni(2+) and Co(2+). The mechanism of action of the CnrCBA complex may be that of a proton/cation antiporter. The chain is Nickel and cobalt resistance protein CnrB (cnrB) from Cupriavidus metallidurans (strain ATCC 43123 / DSM 2839 / NBRC 102507 / CH34) (Ralstonia metallidurans).